A 229-amino-acid chain; its full sequence is Ribonuclease 3 (229 aa).

The RNase III domain occupies 5-127; the sequence is LDRLERKLGY…LIGAIYLDTG (123 aa). A Mg(2+)-binding site is contributed by E40. D44 is a catalytic residue. The Mg(2+) site is built by D113 and E116. The active site involves E116. The DRBM domain occupies 154 to 224; it reads DPKTRLQEFL…AAAALVALGV (71 aa).

This sequence belongs to the ribonuclease III family. As to quaternary structure, homodimer. The cofactor is Mg(2+).

It localises to the cytoplasm. It carries out the reaction Endonucleolytic cleavage to 5'-phosphomonoester.. In terms of biological role, digests double-stranded RNA. Involved in the processing of primary rRNA transcript to yield the immediate precursors to the large and small rRNAs (23S and 16S). Processes some mRNAs, and tRNAs when they are encoded in the rRNA operon. Processes pre-crRNA and tracrRNA of type II CRISPR loci if present in the organism. The sequence is that of Ribonuclease 3 from Pseudomonas paraeruginosa (strain DSM 24068 / PA7) (Pseudomonas aeruginosa (strain PA7)).